The primary structure comprises 200 residues: Recombination protein RecR (200 aa).

The C4-type zinc-finger motif lies at 59-74; it reads CDICGNVCESSPCPVC. The Toprim domain occupies 82 to 177; sequence SVICVVEEPK…KVTRLASGLP (96 aa).

It belongs to the RecR family.

Its function is as follows. May play a role in DNA repair. It seems to be involved in an RecBC-independent recombinational process of DNA repair. It may act with RecF and RecO. This is Recombination protein RecR from Bifidobacterium longum (strain DJO10A).